Consider the following 343-residue polypeptide: Tetraacyldisaccharide 4'-kinase (343 aa).

Gly-61–Thr-68 lines the ATP pocket.

The protein belongs to the LpxK family.

It carries out the reaction a lipid A disaccharide + ATP = a lipid IVA + ADP + H(+). Its pathway is glycolipid biosynthesis; lipid IV(A) biosynthesis; lipid IV(A) from (3R)-3-hydroxytetradecanoyl-[acyl-carrier-protein] and UDP-N-acetyl-alpha-D-glucosamine: step 6/6. Functionally, transfers the gamma-phosphate of ATP to the 4'-position of a tetraacyldisaccharide 1-phosphate intermediate (termed DS-1-P) to form tetraacyldisaccharide 1,4'-bis-phosphate (lipid IVA). This chain is Tetraacyldisaccharide 4'-kinase, found in Colwellia psychrerythraea (strain 34H / ATCC BAA-681) (Vibrio psychroerythus).